Reading from the N-terminus, the 1003-residue chain is MSYTFTRGPVWKYSQSVQYGSHENIPRLSYSTFLPHFEFQDIIPPDDFLTSDEEQDLVLFGTMRGQVVGLRYYTGVVNNNEMVALQREPNNPYDKNAIKVNNVNGNQVGHIKREIAAAVAYIMDNKLAQVEGVVPFGASNTFTMPLYMTFWGKEENRNVVLEQLKKHGFKLGPTPKTLGSSLENAWGSGRAGPSYSRPAHVAVQMTTDQLKTEFDKLFEDLKEDDRTVEMEPAEAIETPLLPHQKQALAWMIARENSKELPPFWEQRNDLYYNTITNFSVKERPENVHGGILADDMGLGKTLTAIAVILTNFDDGRPLLSKRGKKNHPGKEYKDETIKRRGSNMDKKEDGHSESSTCGEEPSISGTPEKSSCTLSQLSSVCPKRRKISVQYIESSDSEEIETSELPQKMKGKLKNVQLNTKSRVKGSSKVKEDSKFALTFFASATQRKMLKKGMSMMECSEACDTGERTRATLIICPLSVLSNWIDQFGQHVKSEVHLNFYVYYGPDRIRDSAWLSKQDIILTTYNILTHDYGTKDDSPLHSIKWLRVILDEGHAIRNPNAQQTKAVLELEAERRWVLTGTPIQNSLKDLWSLLSFLKLKPFIDREWWYRIIQRPVTTGDEGGLRRLQSLIKNITLRRTKTSKIKGKPVLELPERKVFIQHITLSEEERKIYQSVKNEGKAAIGRYFTEGTVLAHYADVLGLLLRLRQICCHTHLLTNGMSSSGPSRSDTPEELRKMLIEKMKIILSSGSDEECAICLDSLTFPVITHCAHVFCKPCICQVIHSEQPHAKCPLCRNEIHGDNLLECPPEELACDSDKESSMEWKSSSKINALMHALIELRTKDPNIKSLVVSQFTTFLSLIETPLKASGFVFTRLDGSMAQKKRVESIQRFQNTEAGSPTIMLLSLKAGGVGLNLCAASRVFLMDPAWNPAAEDQCFDRCHRLGQKQEVIITKFIVKDSVEENMLKIQNTKRDLAAGAFGTKKTDANDMKQAKINEIRTLIDL.

Arg-27 is modified (omega-N-methylarginine). Residues 38-287 (EFQDIIPPDD…FSVKERPENV (250 aa)) are DNA-binding. Lys-112 participates in a covalent cross-link: Glycyl lysine isopeptide (Lys-Gly) (interchain with G-Cter in SUMO2). Residue Tyr-195 is modified to Phosphotyrosine; by JAK2. Lys-211 is covalently cross-linked (Glycyl lysine isopeptide (Lys-Gly) (interchain with G-Cter in SUMO2)). 294-301 (DDMGLGKT) contributes to the ATP binding site. Residues 317-373 (PLLSKRGKKNHPGKEYKDETIKRRGSNMDKKEDGHSESSTCGEEPSISGTPEKSSCT) form a disordered region. Basic and acidic residues predominate over residues 328–352 (PGKEYKDETIKRRGSNMDKKEDGHS). Over residues 353–373 (ESSTCGEEPSISGTPEKSSCT) the composition is skewed to polar residues. Phosphoserine occurs at positions 394, 395, and 397. Positions 433-600 (DSKFALTFFA…WSLLSFLKLK (168 aa)) constitute a Helicase ATP-binding domain. The short motif at 551-554 (DEGH) is the DEGH box element. A Phosphothreonine modification is found at Thr-730. The segment at 754-795 (CAICLDSLTFPVITHCAHVFCKPCICQVIHSEQPHAKCPLCR) adopts an RING-type zinc-finger fold. One can recognise a Helicase C-terminal domain in the interval 831-990 (ALMHALIELR…TKKTDANDMK (160 aa)). The interaction with SP1 and SP3 stretch occupies residues 919–1003 (SRVFLMDPAW…INEIRTLIDL (85 aa)).

It belongs to the SNF2/RAD54 helicase family. RAD16 subfamily. As to quaternary structure, interacts with SP1 and SP3 independently of DNA; the interaction with these transcriptional factors may be required for basal transcription of target genes. Interacts with EGR1; the interaction requires prior binding to DNA and represses c-Rel via a DNA looping mechanism. Interacts with GATA4. Interacts with PCNA; the interaction promotes polyubiquitination of PCNA through association with the UBE2B-RAD18 and UBE2V2-UBE2N ubiquitin ligase complexes. Interacts with RAD18, SHPRH, UBE2V2 and UBE2N. In terms of tissue distribution, expressed in brain, heart, kidney, liver, lung, pancreas, placenta and skeletal muscle.

It localises to the cytoplasm. Its subcellular location is the nucleus. The protein localises to the nucleolus. The protein resides in the nucleoplasm. It catalyses the reaction S-ubiquitinyl-[E2 ubiquitin-conjugating enzyme]-L-cysteine + [acceptor protein]-L-lysine = [E2 ubiquitin-conjugating enzyme]-L-cysteine + N(6)-ubiquitinyl-[acceptor protein]-L-lysine.. It participates in protein modification; protein ubiquitination. Its function is as follows. Has both helicase and E3 ubiquitin ligase activities. Possesses intrinsic ATP-dependent nucleosome-remodeling activity. This activity may be required for transcriptional activation or repression of specific target promoters. These may include the SERPINE1, to which this protein can bind directly. Plays a role in error-free postreplication repair (PRR) of damaged DNA and maintains genomic stability through acting as a ubiquitin ligase for 'Lys-63'-linked polyubiquitination of chromatin-bound PCNA. This Mus musculus (Mouse) protein is Helicase-like transcription factor (Hltf).